A 103-amino-acid chain; its full sequence is Small ribosomal subunit protein uS10 (103 aa).

It belongs to the universal ribosomal protein uS10 family. As to quaternary structure, part of the 30S ribosomal subunit.

In terms of biological role, involved in the binding of tRNA to the ribosomes. This Acidovorax sp. (strain JS42) protein is Small ribosomal subunit protein uS10.